A 99-amino-acid chain; its full sequence is NADH-quinone oxidoreductase subunit K (99 aa).

3 helical membrane-spanning segments follow: residues 3–23, 28–48, and 59–79; these read ILFSLFISMAMFTFGIIGILI, LIVFMCVELMLNAANLLFVAF, and IWVFFVLVVAAAEAAVGLAII.

Belongs to the complex I subunit 4L family. As to quaternary structure, NDH-1 is composed of 14 different subunits. Subunits NuoA, H, J, K, L, M, N constitute the membrane sector of the complex.

It is found in the cell inner membrane. It carries out the reaction a quinone + NADH + 5 H(+)(in) = a quinol + NAD(+) + 4 H(+)(out). NDH-1 shuttles electrons from NADH, via FMN and iron-sulfur (Fe-S) centers, to quinones in the respiratory chain. The immediate electron acceptor for the enzyme in this species is believed to be ubiquinone. Couples the redox reaction to proton translocation (for every two electrons transferred, four hydrogen ions are translocated across the cytoplasmic membrane), and thus conserves the redox energy in a proton gradient. The chain is NADH-quinone oxidoreductase subunit K from Protochlamydia amoebophila (strain UWE25).